The following is a 634-amino-acid chain: tRNA uridine 5-carboxymethylaminomethyl modification enzyme MnmG (634 aa).

13-18 serves as a coordination point for FAD; the sequence is GAGHAG. 273–287 is a binding site for NAD(+); that stretch reads GPRYCPSIEDKIIKF.

The protein belongs to the MnmG family. Homodimer. Heterotetramer of two MnmE and two MnmG subunits. FAD serves as cofactor.

It is found in the cytoplasm. In terms of biological role, NAD-binding protein involved in the addition of a carboxymethylaminomethyl (cmnm) group at the wobble position (U34) of certain tRNAs, forming tRNA-cmnm(5)s(2)U34. In Buchnera aphidicola subsp. Cinara cedri (strain Cc), this protein is tRNA uridine 5-carboxymethylaminomethyl modification enzyme MnmG.